The chain runs to 233 residues: Octanoyltransferase (233 aa).

In terms of domain architecture, BPL/LPL catalytic spans 36-211; that stretch reads DTTPDEIWLV…EFTRQLGYPT (176 aa). Residues 75–82, 142–144, and 155–157 each bind substrate; these read RGGQVTYH, SLG, and GLA. Cys-173 serves as the catalytic Acyl-thioester intermediate.

The protein belongs to the LipB family.

It is found in the cytoplasm. It catalyses the reaction octanoyl-[ACP] + L-lysyl-[protein] = N(6)-octanoyl-L-lysyl-[protein] + holo-[ACP] + H(+). It participates in protein modification; protein lipoylation via endogenous pathway; protein N(6)-(lipoyl)lysine from octanoyl-[acyl-carrier-protein]: step 1/2. Functionally, catalyzes the transfer of endogenously produced octanoic acid from octanoyl-acyl-carrier-protein onto the lipoyl domains of lipoate-dependent enzymes. Lipoyl-ACP can also act as a substrate although octanoyl-ACP is likely to be the physiological substrate. The protein is Octanoyltransferase of Yersinia pseudotuberculosis serotype O:3 (strain YPIII).